The chain runs to 222 residues: Sortase A (222 aa).

At 1 to 7 the chain is on the cytoplasmic side; sequence MLKKTIA. A helical membrane pass occupies residues 8-28; it reads IIILIIGLLLIFSPFIKNGIV. The Extracellular portion of the chain corresponds to 29–222; that stretch reads KYMSGHETIE…ELENKYFPSK (194 aa). Histidine 127 functions as the Proton donor/acceptor in the catalytic mechanism. Cysteine 188 serves as the catalytic Acyl-thioester intermediate.

This sequence belongs to the bacterial sortase family. Class A subfamily.

The protein localises to the cell membrane. Its activity is regulated as follows. Activity is enhanced by Zn(2+) and strongly enhanced by Ca(2+). Inhibited by chalcone, a precursor of several flavonoids, which blocks the SrtA active site. In terms of biological role, transpeptidase that anchors surface proteins to the cell wall. Recognizes and modifies its substrate by proteolytic cleavage of a C-terminal sorting signal. Following cleavage, a covalent intermediate is formed via a thioester bond between the sortase and its substrate, which is then transferred and covalently attached to the cell wall. This sortase recognizes a Leu-Pro-x-Thr-Gly (LPXTG) motif, which is cleaved by the sortase between the threonine and glycine residues. Involved in pathogenesis. May regulate the rate of synthesis and/or the stability of a subset of LPXTG proteins. Not involved in cell wall-anchoring of Hbp2 (SvpA) or Hbp1. The polypeptide is Sortase A (Listeria monocytogenes serovar 1/2a (strain ATCC BAA-679 / EGD-e)).